We begin with the raw amino-acid sequence, 159 residues long: uncharacterized protein (159 aa).

It belongs to the IIV-6 136R family.

This is an uncharacterized protein from Invertebrate iridescent virus 3 (IIV-3).